We begin with the raw amino-acid sequence, 393 residues long: Trehalose import ATP-binding protein SugC (393 aa).

In terms of domain architecture, ABC transporter spans 4 to 235 (IVLDHVNKSY…PANLFVAGFI (232 aa)). 37–44 (GPSGCGKT) provides a ligand contact to ATP. Positions 135–139 (LSGGQ) match the Helical C-loop; LSGGQ motif motif.

It belongs to the ABC transporter superfamily. As to quaternary structure, monomer. Homodimerizes in the presence of ATP. The complex is composed of two ATP-binding proteins (SugC), two transmembrane proteins (SugA and SugB) and a solute-binding protein (LpqY).

The protein resides in the cell inner membrane. It catalyses the reaction alpha,alpha-trehalose(out) + ATP + H2O = alpha,alpha-trehalose(in) + ADP + phosphate + H(+). In terms of biological role, part of the ABC transporter complex LpqY-SugA-SugB-SugC, which is highly specific for uptake of trehalose. Involved in the recycling of extracellular trehalose released from trehalose-containing molecules synthesized by M.tuberculosis. Trehalose uptake is essential for virulence. Responsible for energy coupling to the transport system. The protein is Trehalose import ATP-binding protein SugC (sugC) of Mycobacterium tuberculosis (strain CDC 1551 / Oshkosh).